Here is a 668-residue protein sequence, read N- to C-terminus: Golgin candidate 2 (668 aa).

The segment at 22 to 317 (QAADSLRKDE…RQREERRRRR (296 aa)) is disordered. Residues 26-39 (SLRKDEKSETHDEV) are compositionally biased toward basic and acidic residues. Polar residues-rich tracts occupy residues 64-86 (GSDS…LSSS) and 100-113 (SAPS…NTKL). 2 stretches are compositionally biased toward low complexity: residues 123–141 (STPN…GGTS) and 168–178 (SSSSNVVNSRG). Composition is skewed to basic and acidic residues over residues 184–207 (TNKE…RNAP), 215–237 (THKE…RRSA), and 250–259 (GKRDGRESRR). Residues 290-302 (DESESDYESDSST) are compositionally biased toward acidic residues. Positions 303 to 312 (DSERERQREE) are enriched in basic and acidic residues. A coiled-coil region spans residues 331-539 (AVIKERENMV…SQVEALSSEK (209 aa)). The next 2 membrane-spanning stretches (helical) occupy residues 594 to 614 (KHLG…TVFL) and 622 to 642 (IWAV…LLSH).

It localises to the golgi apparatus membrane. Its function is as follows. Golgi matrix protein playing a role in tethering of vesicles to Golgi membranes and in maintaining the overall structure of the Golgi apparatus. The chain is Golgin candidate 2 (GC2) from Arabidopsis thaliana (Mouse-ear cress).